A 669-amino-acid chain; its full sequence is L-type lectin-domain containing receptor kinase IV.4 (669 aa).

Residues 1–23 (MFFIKLFTIFFLSFFWQSLKSSS) form the signal peptide. At 24-294 (QIIDFTYNGF…TRVYRFYKNW (271 aa)) the chain is on the extracellular side. The tract at residues 26–260 (IDFTYNGFRP…SEIFVLGWSF (235 aa)) is legume-lectin like. 5 N-linked (GlcNAc...) asparagine glycosylation sites follow: asparagine 58, asparagine 80, asparagine 127, asparagine 152, and asparagine 185. A helical transmembrane segment spans residues 295-315 (VPLISLLLIPFLLIIFLVRFI). Residues 316 to 669 (MKRRRKFAEE…VAYSLLSSGR (354 aa)) lie on the Cytoplasmic side of the membrane. A Protein kinase domain is found at 350-627 (FKDKNILGSG…LQYLRGDAML (278 aa)). ATP-binding positions include 356 to 364 (LGSGGFGSV) and lysine 379. The active-site Proton acceptor is the aspartate 475.

It in the C-terminal section; belongs to the protein kinase superfamily. Ser/Thr protein kinase family. The protein in the N-terminal section; belongs to the leguminous lectin family.

It localises to the cell membrane. The enzyme catalyses L-seryl-[protein] + ATP = O-phospho-L-seryl-[protein] + ADP + H(+). It catalyses the reaction L-threonyl-[protein] + ATP = O-phospho-L-threonyl-[protein] + ADP + H(+). In terms of biological role, involved in resistance response to the pathogenic oomycetes Phytophthora infestans and Phytophthora capsici and to the pathogenic bacteria Pseudomonas syringae. The protein is L-type lectin-domain containing receptor kinase IV.4 of Arabidopsis thaliana (Mouse-ear cress).